The following is a 759-amino-acid chain: Polyribonucleotide nucleotidyltransferase (759 aa).

Asp-522 and Asp-528 together coordinate Mg(2+). The region spanning 588-647 (PRITTIKVPVDKIGEVIGPKGKMINSITEETGASISIEDDGTVFVGASNGEAAQAAIDKI) is the KH domain. The 70-residue stretch at 659–728 (GERFLGTVVK…NRGKISLVLV (70 aa)) folds into the S1 motif domain. The disordered stretch occupies residues 734-759 (AEASDNGSATPSDKAPATADATTAGN). The span at 741 to 759 (SATPSDKAPATADATTAGN) shows a compositional bias: low complexity.

This sequence belongs to the polyribonucleotide nucleotidyltransferase family. It depends on Mg(2+) as a cofactor.

Its subcellular location is the cytoplasm. The enzyme catalyses RNA(n+1) + phosphate = RNA(n) + a ribonucleoside 5'-diphosphate. Functionally, involved in mRNA degradation. Catalyzes the phosphorolysis of single-stranded polyribonucleotides processively in the 3'- to 5'-direction. In Mycobacterium sp. (strain JLS), this protein is Polyribonucleotide nucleotidyltransferase.